The primary structure comprises 326 residues: rRNA 2'-O-methyltransferase fibrillarin (326 aa).

Residues 1-84 are disordered; the sequence is MAFQPGSRGG…GGARGGAKGG (84 aa). Over residues 7 to 83 the composition is skewed to gly residues; the sequence is SRGGRGGARG…RGGARGGAKG (77 aa). 18 positions are modified to asymmetric dimethylarginine: Arg8, Arg11, Arg15, Arg19, Arg23, Arg26, Arg32, Arg36, Arg39, Arg45, Arg49, Arg55, Arg59, Arg63, Arg67, Arg71, Arg74, and Arg78. Residues 180 to 181, 199 to 200, 224 to 225, and 244 to 247 each bind S-adenosyl-L-methionine; these read TS, EF, DA, and DVAQ.

Belongs to the methyltransferase superfamily. Fibrillarin family. In terms of assembly, component of box C/D small nucleolar ribonucleoprotein (snoRNP) particles that contain SNU13, NOP1, SIK1/NOP56 and NOP58, plus a guide RNA. By homology to other fibrillarins, some or all of the N-terminal domain arginines are modified to asymmetric dimethylarginine (DMA).

It is found in the nucleus. The protein localises to the nucleolus. It catalyses the reaction L-glutaminyl-[histone H2A] + S-adenosyl-L-methionine = N(5)-methyl-L-glutaminyl-[histone H2A] + S-adenosyl-L-homocysteine + H(+). In terms of biological role, S-adenosyl-L-methionine-dependent methyltransferase that has the ability to methylate both RNAs and proteins. Involved in pre-rRNA processing. Utilizes the methyl donor S-adenosyl-L-methionine to catalyze the site-specific 2'-hydroxyl methylation of ribose moieties in pre-ribosomal RNA. Site specificity is provided by a guide RNA that base pairs with the substrate. Methylation occurs at a characteristic distance from the sequence involved in base pairing with the guide RNA. Also acts as a protein methyltransferase by mediating methylation of 'Gln-105' of histone H2A (H2AQ105me), a modification that impairs binding of the FACT complex and is specifically present at 35S ribosomal DNA locus. The polypeptide is rRNA 2'-O-methyltransferase fibrillarin (NOP1) (Eremothecium gossypii (strain ATCC 10895 / CBS 109.51 / FGSC 9923 / NRRL Y-1056) (Yeast)).